The chain runs to 223 residues: Uracil-DNA glycosylase (223 aa).

The Proton acceptor role is filled by D64.

Belongs to the uracil-DNA glycosylase (UDG) superfamily. UNG family.

The protein resides in the cytoplasm. It catalyses the reaction Hydrolyzes single-stranded DNA or mismatched double-stranded DNA and polynucleotides, releasing free uracil.. Excises uracil residues from the DNA which can arise as a result of misincorporation of dUMP residues by DNA polymerase or due to deamination of cytosine. The sequence is that of Uracil-DNA glycosylase from Desulfitobacterium hafniense (strain DSM 10664 / DCB-2).